The primary structure comprises 705 residues: MGESPASAVLNASAGLFSLKMETLESELTCPICLELFEDPLLLPCAHSLCFSCAHRILVSSCSSGESIEPITAFQCPTCRYVISLNHRGLDGLKRNVTLQNIIDRFQKASVSGPNSPSESRRERTYRPSSAMSSERIACQFCEQDPPRDAVKTCITCEVSYCDRCLRATHPNKKPFTSHRLVEPVSDTHLRGITCLDHENEKVNMYCVSDDQLICALCKLVGRHRDHQVASLNDRFEKLKQTLEMNLTNLVKRNSELENQMAKLIQICQQVEVNTAMHEAKLMEECDELVEIIQQRKQMIAVKIKETKVMKLRKLAQQVANCRQCLERSTVLINQAEHILKENDQARFLQSAKNIAERVAMATASSQVLIPDINFNDAFENFALDFSREKKLLEGLDYLTAPNPPSIREELCTASHDTITVHWISDDEFSISSYELQYTIFTGQANFISLYNSVDSWMIVPNIKQNHYTVHGLQSGTRYIFIVKAINQAGSRNSEPTRLKTNSQPFKLDPKMTHKKLKISNDGLQMEKDESSLKKSHTPERFSGTGCYGAAGNIFIDSGCHYWEVVMGSSTWYAIGIAYKSAPKNEWIGKNASSWVFSRCNSNFVVRHNNKEMLVDVPPQLKRLGVLLDYDNNMLSFYDPANSLHLHTFDVTFILPVCPTFTIWNKSLMILSGLPAPDFIDYPERQECNCRPQESPYVSGMKACH.

Residues 30–80 (CPICLELFEDPLLLPCAHSLCFSCAHRILVSSCSSGESIEPITAFQCPTCR) form an RING-type zinc finger. The B box-type 1; degenerate zinc-finger motif lies at 137–184 (IACQFCEQDPPRDAVKTCITCEVSYCDRCLRATHPNKKPFTSHRLVEP). The segment at 190–232 (LRGITCLDHENEKVNMYCVSDDQLICALCKLVGRHRDHQVASL) adopts a B box-type 2 zinc-finger fold. Positions 195, 198, 218, and 224 each coordinate Zn(2+). The stretch at 233–301 (NDRFEKLKQT…IIQQRKQMIA (69 aa)) forms a coiled coil. The 60-residue stretch at 340-399 (LKENDQARFLQSAKNIAERVAMATASSQVLIPDINFNDAFENFALDFSREKKLLEGLDYL) folds into the COS domain. Residues 404–504 (PPSIREELCT…EPTRLKTNSQ (101 aa)) form the Fibronectin type-III domain. The 194-residue stretch at 486-679 (INQAGSRNSE…ILSGLPAPDF (194 aa)) folds into the B30.2/SPRY domain.

The protein belongs to the TRIM/RBCC family. As to quaternary structure, homodimer or heterodimer with MID1. Interacts with IGBP1. Post-translationally, phosphorylated on serine and threonine residues. Low abundance in brain and lung, with even lower levels in heart, liver, and kidney.

It is found in the cytoplasm. The protein resides in the cytoskeleton. The enzyme catalyses S-ubiquitinyl-[E2 ubiquitin-conjugating enzyme]-L-cysteine + [acceptor protein]-L-lysine = [E2 ubiquitin-conjugating enzyme]-L-cysteine + N(6)-ubiquitinyl-[acceptor protein]-L-lysine.. It participates in protein modification; protein ubiquitination. Its function is as follows. E3 ubiquitin ligase that plays a role in microtubule stabilization. Mediates the 'Lys-48'-linked polyubiquitination of LRRK2 to drive its localization to microtubules and its proteasomal degradation in neurons. This ubiquitination inhibits LRRK2 kinase activation by RAB29. This is Probable E3 ubiquitin-protein ligase MID2 (Mid2) from Mus musculus (Mouse).